We begin with the raw amino-acid sequence, 793 residues long: ClpA homolog protein (793 aa).

Residues 1–24 (MRPRSNAGSSPPDPEEQEHAQVPS) are disordered. One can recognise a Clp R domain in the interval 22 to 168 (VPSFSSTLEQ…NFIAHGVAKD (147 aa)). 2 repeat regions span residues 25–88 (FSST…IDDD) and 103–168 (PTAA…VAKD). The interval 169–194 (PSYGESRPVQGADEPQETPKAEAGEA) is disordered. A compositionally biased stretch (basic and acidic residues) spans 185–194 (ETPKAEAGEA). Residues 199–447 (LSKYCVDLNI…AQHLVSDSKR (249 aa)) are i. ATP contacts are provided by residues 244–251 (GDPGVGKT) and 525–532 (GPTGVGKT). An II region spans residues 451 to 639 (LGTKEIEAVV…ILIMTSNVGA (189 aa)).

This sequence belongs to the ClpA/ClpB family.

The polypeptide is ClpA homolog protein (Fuscovulum blasticum (Rhodobacter blasticus)).